The following is a 292-amino-acid chain: Ribonuclease Z (292 aa).

Histidine 60, histidine 62, aspartate 64, histidine 65, histidine 132, aspartate 200, and histidine 256 together coordinate Zn(2+). Aspartate 64 serves as the catalytic Proton acceptor.

Belongs to the RNase Z family. Homodimer. Requires Zn(2+) as cofactor.

It catalyses the reaction Endonucleolytic cleavage of RNA, removing extra 3' nucleotides from tRNA precursor, generating 3' termini of tRNAs. A 3'-hydroxy group is left at the tRNA terminus and a 5'-phosphoryl group is left at the trailer molecule.. Its function is as follows. Zinc phosphodiesterase, which displays some tRNA 3'-processing endonuclease activity. Probably involved in tRNA maturation, by removing a 3'-trailer from precursor tRNA. This Sulfolobus acidocaldarius (strain ATCC 33909 / DSM 639 / JCM 8929 / NBRC 15157 / NCIMB 11770) protein is Ribonuclease Z.